A 268-amino-acid polypeptide reads, in one-letter code: Ubiquinone biosynthesis protein COQ4 homolog, mitochondrial (268 aa).

Zn(2+) is bound by residues His-171, Asp-172, His-175, and Glu-187.

It belongs to the COQ4 family. As to quaternary structure, component of a multi-subunit COQ enzyme complex. It depends on Zn(2+) as a cofactor.

It localises to the mitochondrion inner membrane. The catalysed reaction is a 4-hydroxy-3-methoxy-5-(all-trans-polyprenyl)benzoate + H(+) = a 2-methoxy-6-(all-trans-polyprenyl)phenol + CO2. The protein operates within cofactor biosynthesis; ubiquinone biosynthesis. Lyase that catalyzes the C1-decarboxylation of 4-hydroxy-3-methoxy-5-(all-trans-polyprenyl)benzoic acid into 2-methoxy-6-(all-trans-polyprenyl)phenol during ubiquinone biosynthesis. The chain is Ubiquinone biosynthesis protein COQ4 homolog, mitochondrial from Drosophila sechellia (Fruit fly).